Reading from the N-terminus, the 180-residue chain is Cytokinin-beta-glucosidase 4 (180 aa).

Functionally, hydrolyzes cytokinin glucosides thus liberating free cytokinins. This chain is Cytokinin-beta-glucosidase 4 (ROLC4), found in Panax ginseng (Korean ginseng).